The primary structure comprises 156 residues: Transcriptional repressor NrdR (156 aa).

A zinc finger spans residues 3-34 (CPYCRHPDSRVVDSREAEEGAAIRRRRSCPNC). The region spanning 46–136 (LSVVKRSGVT…VYRSFTSAED (91 aa)) is the ATP-cone domain.

It belongs to the NrdR family. Zn(2+) is required as a cofactor.

Its function is as follows. Negatively regulates transcription of bacterial ribonucleotide reductase nrd genes and operons by binding to NrdR-boxes. This is Transcriptional repressor NrdR from Nocardia farcinica (strain IFM 10152).